A 1135-amino-acid polypeptide reads, in one-letter code: uncharacterized protein (1135 aa).

Positions 1–28 (MALFPRGILIALVLSFVLNLGLVTKIHA) are cleaved as a signal peptide. Transmembrane regions (helical) follow at residues 332-352 (IVTAFLTLYVMFFGFKLLLAG), 359-379 (EYINFILKIIFVTYFSIGINI), 393-413 (MIQWVFPFLLNGISGLANWVM), 495-515 (MLVSLALSYPLLVISVAAFMV), 522-542 (MISIVILGILAPLFVPMFLFA), 555-575 (MISFLLQPMVVVTFMITMFAV), and 700-720 (IKNIFLALITACFTLYLMYNF).

It belongs to the TrbL/VirB6 family.

Its subcellular location is the cell membrane. This is an uncharacterized protein from Rickettsia typhi (strain ATCC VR-144 / Wilmington).